The chain runs to 310 residues: D-erythrulose 1-phosphate 3-epimerase (310 aa).

The catalysed reaction is D-erythrulose 1-phosphate = L-erythrulose 1-phosphate. Its pathway is carbohydrate metabolism; erythritol degradation. Functionally, catalyzes the racemization of D-erythrulose 1-phosphate to L-erythrulose 1-phosphate. This Brucella abortus (strain 2308) protein is D-erythrulose 1-phosphate 3-epimerase.